The sequence spans 929 residues: Lon protease homolog 2, peroxisomal (929 aa).

In terms of domain architecture, Lon N-terminal spans 11–257 (LPLVPLPKGS…RVVEILTRQL (247 aa)). Positions 302–325 (GLTPPGLSAGRNNDNDDKESNEVD) are disordered. ATP is bound at residue 484–491 (GPPGVGKT). Positions 727–914 (HGRPGVVTGL…WEAIRQVWPD (188 aa)) constitute a Lon proteolytic domain. Active-site residues include Ser820 and Lys863. Residues 927 to 929 (SRL) carry the Microbody targeting signal motif.

This sequence belongs to the peptidase S16 family.

The protein localises to the peroxisome matrix. The enzyme catalyses Hydrolysis of proteins in presence of ATP.. In terms of biological role, ATP-dependent serine protease that mediates the selective degradation of misfolded and unassembled polypeptides in the peroxisomal matrix. Necessary for type 2 peroxisome targeting signal (PTS2)-containing protein processing and facilitates peroxisome matrix protein import. This chain is Lon protease homolog 2, peroxisomal, found in Aspergillus niger (strain ATCC MYA-4892 / CBS 513.88 / FGSC A1513).